Reading from the N-terminus, the 1093-residue chain is MSSFFKSFAGNPREAAAMAMVQSSSYRVLSGKSCSNLRRNTPLDSFLAKGRSSVKAFSFLYVSRFSTEPNNEFGHSSKRRSRGPVMAAKKASEGEKQEDGKYKQTVDLPKTGFGMRANSLTREPELQKLWEENQVFKRVSDNNNGGSFILHDGPPYANGDLHMGHALNKILKDIINRYKLLQNYKVQYVPGWDCHGLPIELKVLQSLDQEVRKELTPLKLRAKAAKFAKATVKTQMESFKRFGVWADWNNPYLTLDPEYEAAQIEVFGQMALKGYIYRGRKPVHWSPSSRTALAEAELEYPEGHISKSIYAIFKLVGGAKTSLLDEFIPNIYLAVWTTTPWTMPANAAVAVNAKLQYSVVEVQSFSEDESTVTSNKKKIPGKVLKNQQKLFVIVATDLVPALEAKWGVKLSISKTFLGSDLENCRYTHPIDNRDCPVVIGGDYITTESGTGLVHTAPGHGQEDYATGLKYGLPLVSPVDDEGKFTEEAGQFRGLSVLGEGNTAVVSYLDENMSLVMEESYAHKYPYDWRTKKPTIFRATEQWFASVEGFRTATMDAINNVKWVPHQAVNRISAMTSSRSDWCISRQRTWGVPIPAFYHVKTKEPLMNEETINHVKSIISQKGSDAWWYMSVEDLLPEKYRDKAADYEKGTDTMDVWFDSGSSWAGVLGKREGLSFPADVYLEGTDQHRGWFQSSLLTSIATQGKAPYSAVITHGFVLDEKGMKMSKSLGNVVDPRLVIEGGKNSKDAPAYGADVMRLWVSSVDYTGDVLIGPQILRQMSDIYRKLRGTLRYLLGNLHDWRVDNAVPYQDLPIIDQHALFQLENVVKNIQECYENYQFFKIFQIIQRFTIVDLSNFYFDIAKDRLYTGGTSSFTRRSCQTVLSTHLLSILRVIAPIVPHLAEDVWQNLPFEYRNEDGSAAEFVFELKWPTLNEQWLSFPAEDVLFWQRLLELRTEVNKVLELARNEKMIGSSLEAKVYLHTADAGMAAKLLEMSEAKNEADTLQRIFITSQVEVLSSMEKEMISSVQHTGEYVEGENKVWIGVSRAEGSKCERCWNYSGQVGSFSDHPTLCGRCFSVIVANPPEPAVAAVNSLA.

A disordered region spans residues 69–103 (PNNEFGHSSKRRSRGPVMAAKKASEGEKQEDGKYK). Positions 90–103 (KASEGEKQEDGKYK) are enriched in basic and acidic residues. Residues 155-165 (PYANGDLHMGH) carry the 'HIGH' region motif. Glu-682 contributes to the L-isoleucyl-5'-AMP binding site. The 'KMSKS' region motif lies at 723 to 727 (KMSKS). ATP is bound at residue Lys-726. Residues Cys-1050, Cys-1053, Cys-1070, and Cys-1073 each contribute to the Zn(2+) site.

Belongs to the class-I aminoacyl-tRNA synthetase family.

It is found in the plastid. The protein resides in the chloroplast. It localises to the mitochondrion. It catalyses the reaction tRNA(Ile) + L-isoleucine + ATP = L-isoleucyl-tRNA(Ile) + AMP + diphosphate. This chain is Isoleucine--tRNA ligase, chloroplastic/mitochondrial, found in Arabidopsis thaliana (Mouse-ear cress).